The sequence spans 75 residues: Iota-conotoxin-like R11.3 (75 aa).

The first 19 residues, 1 to 19, serve as a signal peptide directing secretion; sequence MKLCLTFLLVLMILASVTG. A propeptide spanning residues 20–34 is cleaved from the precursor; that stretch reads EKLSEQTLRRAARKN. Intrachain disulfides connect C39/C53, C46/C58, C52/C63, and C57/C70.

The protein belongs to the conotoxin I1 superfamily. In terms of tissue distribution, expressed by the venom duct.

The protein resides in the secreted. Functionally, iota-conotoxins bind to voltage-gated sodium channels (Nav) and act as agonists by shifting the voltage-dependence of activation to more hyperpolarized levels. Produces general excitatory symptoms. This Conus radiatus (Rayed cone) protein is Iota-conotoxin-like R11.3.